A 98-amino-acid chain; its full sequence is Large ribosomal subunit protein uL23 (98 aa).

Belongs to the universal ribosomal protein uL23 family. Part of the 50S ribosomal subunit. Contacts protein L29, and trigger factor when it is bound to the ribosome.

Functionally, one of the early assembly proteins it binds 23S rRNA. One of the proteins that surrounds the polypeptide exit tunnel on the outside of the ribosome. Forms the main docking site for trigger factor binding to the ribosome. The polypeptide is Large ribosomal subunit protein uL23 (Methylorubrum extorquens (strain CM4 / NCIMB 13688) (Methylobacterium extorquens)).